We begin with the raw amino-acid sequence, 507 residues long: MEEIKEMGPTLPACPPCVMVIFGATGDLTARKLFPALYNLTKEGRLSENFVCVGFARRPKSHEQFREEMRQAIQNFSHSSEIDIRVWESLEHRIFYHQANFSEAEGYSSLRSFLESVDQKYGTKGNRLFYLSTPPDYFQEIIRNLNRHQLFYHEQGAQQPWSRLIIEKPFGVDLQTAQELQQCIDANINEESVYRIDHYLGKETVQNILTIRFANTLFESCWNSQYIDHVQISVSESIGIGSRGNFFEKSGMLRDMVQNHLMQLLCLLTMEPPSEFSSAEIKKEKIKILKKILPIREEDVIRGQYGEGVVQGVSVSGYREEENVDPNSLVETYVALKLFIDNPRWKGVPFYLQAGKRLPKRTTDIAVIFKKSSYDLFNSENCPLCPLENDLLIIRIQPDEGVALQFNCKVPGTNKLVRPVKMDFRYDSYFNTVTPEAYERLLCDCILGDRTLFTSNEEVLASWELFSPLLEQWSKIRPIFPNYIAGSLRPQGADELLSRDGRAWRSY.

Residues arginine 57 and lysine 168 each contribute to the NADP(+) site. Residues histidine 198, lysine 202, glutamate 236, and aspartate 255 each contribute to the substrate site. Histidine 260 (proton acceptor) is an active-site residue. Lysine 356 contacts substrate.

It belongs to the glucose-6-phosphate dehydrogenase family.

The catalysed reaction is D-glucose 6-phosphate + NADP(+) = 6-phospho-D-glucono-1,5-lactone + NADPH + H(+). The protein operates within carbohydrate degradation; pentose phosphate pathway; D-ribulose 5-phosphate from D-glucose 6-phosphate (oxidative stage): step 1/3. Functionally, catalyzes the oxidation of glucose 6-phosphate to 6-phosphogluconolactone. This is Glucose-6-phosphate 1-dehydrogenase from Chlamydia muridarum (strain MoPn / Nigg).